Reading from the N-terminus, the 301-residue chain is Ornithine carbamoyltransferase (301 aa).

Carbamoyl phosphate-binding positions include 47-50, Q74, R98, and 125-128; these read STRT and HPMQ. L-ornithine contacts are provided by residues N156, D220, and 224–225; that span reads SM. Residues 260 to 261 and R288 each bind carbamoyl phosphate; that span reads CL.

The protein belongs to the aspartate/ornithine carbamoyltransferase superfamily. OTCase family.

It is found in the cytoplasm. It catalyses the reaction carbamoyl phosphate + L-ornithine = L-citrulline + phosphate + H(+). It participates in amino-acid biosynthesis; L-arginine biosynthesis; L-arginine from L-ornithine and carbamoyl phosphate: step 1/3. Its function is as follows. Reversibly catalyzes the transfer of the carbamoyl group from carbamoyl phosphate (CP) to the N(epsilon) atom of ornithine (ORN) to produce L-citrulline. This Picrophilus torridus (strain ATCC 700027 / DSM 9790 / JCM 10055 / NBRC 100828 / KAW 2/3) protein is Ornithine carbamoyltransferase.